The following is a 682-amino-acid chain: Acyl-CoA synthetase short-chain family member 3, mitochondrial (682 aa).

The N-terminal 29 residues, 1–29 (MKPSWLQCRKVTGAGTLGAPLPGSPSVRG), are a transit peptide targeting the mitochondrion. 222–225 (EPGR) is a binding site for CoA. Residues 420–422 (GER) and 441–446 (DHWWQT) each bind ATP. Position 513 is an N6-succinyllysine (Lys513). The residue at position 519 (Lys519) is an N6-acetyllysine. ATP-binding residues include Asp534, Arg549, and Arg560. Arg619 provides a ligand contact to CoA.

The protein belongs to the ATP-dependent AMP-binding enzyme family.

It is found in the mitochondrion matrix. It carries out the reaction acetate + ATP + CoA = acetyl-CoA + AMP + diphosphate. The enzyme catalyses propanoate + ATP + CoA = propanoyl-CoA + AMP + diphosphate. It catalyses the reaction butanoate + ATP + CoA = butanoyl-CoA + AMP + diphosphate. Functionally, catalyzes the synthesis of acetyl-CoA from short-chain fatty acids. Propionate is the preferred substrate but can also utilize acetate and butyrate with a much lower affinity. In Mus musculus (Mouse), this protein is Acyl-CoA synthetase short-chain family member 3, mitochondrial (Acss3).